Here is a 128-residue protein sequence, read N- to C-terminus: Large ribosomal subunit protein eL22 (128 aa).

The protein belongs to the eukaryotic ribosomal protein eL22 family. Component of the large ribosomal subunit.

It localises to the cytoplasm. Its function is as follows. Component of the large ribosomal subunit. The ribosome is a large ribonucleoprotein complex responsible for the synthesis of proteins in the cell. This is Large ribosomal subunit protein eL22 (RPL22) from Gallus gallus (Chicken).